The chain runs to 555 residues: Serine/threonine-protein kinase AGC1-7 (555 aa).

Residues 1–126 (MLTKPGKKLD…PSKPHTGGDI (126 aa)) form a disordered region. Composition is skewed to basic and acidic residues over residues 7–16 (KKLDSSESTH) and 35–54 (PRKE…DNLI). The segment covering 84-118 (SQSNLNTKPNNNNSNNNSNMSSRSNSIESTSSNPS) has biased composition (low complexity). The region spanning 146-480 (FRLLKRLGYG…ATEIKQHPFF (335 aa)) is the Protein kinase domain. Residues 152–160 (LGYGDIGSV) and K175 each bind ATP. Residue D271 is the Proton acceptor of the active site. Residues 481 to 555 (EGVNWALIRS…DPDYIDFEYF (75 aa)) form the AGC-kinase C-terminal domain. The segment at 514–547 (AAVDGGGKKNNNGAGGGCSTGGGDNKPNGDCNDP) is disordered. Over residues 526-537 (GAGGGCSTGGGD) the composition is skewed to gly residues.

The protein belongs to the protein kinase superfamily. AGC Ser/Thr protein kinase family. Interacts with PDPK1/PDK1. Autophosphorylated and phosphorylated by PDPK1/PDK1. As to expression, specifically expressed in pollen grains.

The protein resides in the cytoplasm. The catalysed reaction is L-seryl-[protein] + ATP = O-phospho-L-seryl-[protein] + ADP + H(+). The enzyme catalyses L-threonyl-[protein] + ATP = O-phospho-L-threonyl-[protein] + ADP + H(+). Its activity is regulated as follows. Activated by PDPK1/PDK1. In terms of biological role, functions redudantly with AGC1-5 as signaling component in the pollen tube. Required for polarized growth of pollen tubes. This is Serine/threonine-protein kinase AGC1-7 from Arabidopsis thaliana (Mouse-ear cress).